Consider the following 400-residue polypeptide: Ribose-phosphate pyrophosphokinase 2, chloroplastic (400 aa).

A chloroplast-targeting transit peptide spans 1-44 (MASLALTSPPSVKIPSYLSSSSSSLFSRSSISFRTTESRSRICV). 4 residues coordinate Mg(2+): D214, H216, D225, and D229. A binding of phosphoribosylpyrophosphate region spans residues 300–315 (GKVAVMVDDIIDTAGT).

This sequence belongs to the ribose-phosphate pyrophosphokinase family.

Its subcellular location is the plastid. It localises to the chloroplast. The enzyme catalyses D-ribose 5-phosphate + ATP = 5-phospho-alpha-D-ribose 1-diphosphate + AMP + H(+). In Arabidopsis thaliana (Mouse-ear cress), this protein is Ribose-phosphate pyrophosphokinase 2, chloroplastic (PRS2).